We begin with the raw amino-acid sequence, 389 residues long: 23S rRNA (uracil(747)-C(5))-methyltransferase RlmC (389 aa).

[4Fe-4S] cluster-binding residues include C6, C14, C17, and C92. Residues Q217, F246, E273, and N319 each contribute to the S-adenosyl-L-methionine site. C346 (nucleophile) is an active-site residue.

It belongs to the class I-like SAM-binding methyltransferase superfamily. RNA M5U methyltransferase family. RlmC subfamily.

It carries out the reaction uridine(747) in 23S rRNA + S-adenosyl-L-methionine = 5-methyluridine(747) in 23S rRNA + S-adenosyl-L-homocysteine + H(+). Its function is as follows. Catalyzes the formation of 5-methyl-uridine at position 747 (m5U747) in 23S rRNA. In Glaesserella parasuis serovar 5 (strain SH0165) (Haemophilus parasuis), this protein is 23S rRNA (uracil(747)-C(5))-methyltransferase RlmC.